We begin with the raw amino-acid sequence, 862 residues long: Leucine--tRNA ligase (862 aa).

The 'HIGH' region signature appears at Pro-51 to His-61. The 'KMSKS' region signature appears at Lys-624 to Ser-628. An ATP-binding site is contributed by Lys-627.

This sequence belongs to the class-I aminoacyl-tRNA synthetase family.

It localises to the cytoplasm. The enzyme catalyses tRNA(Leu) + L-leucine + ATP = L-leucyl-tRNA(Leu) + AMP + diphosphate. This chain is Leucine--tRNA ligase, found in Prochlorococcus marinus (strain NATL1A).